We begin with the raw amino-acid sequence, 24 residues long: Brevinin-1R (24 aa).

Cysteine 18 and cysteine 24 are joined by a disulfide.

As to expression, expressed by the skin glands.

Its subcellular location is the secreted. In terms of biological role, antimicrobial peptide. The polypeptide is Brevinin-1R (Pelophylax ridibundus (Marsh frog)).